The primary structure comprises 208 residues: 2,3-bisphosphoglycerate-dependent phosphoglycerate mutase (208 aa).

Substrate is bound by residues 9–16, 22–23, Arg-61, 88–91, Lys-99, 115–116, and 159–160; these read RHGQSEWN, TG, ERDY, RR, and GN. The active-site Tele-phosphohistidine intermediate is His-10. The active-site Proton donor/acceptor is Glu-88.

This sequence belongs to the phosphoglycerate mutase family. BPG-dependent PGAM subfamily. In terms of assembly, homodimer.

The catalysed reaction is (2R)-2-phosphoglycerate = (2R)-3-phosphoglycerate. Its pathway is carbohydrate degradation; glycolysis; pyruvate from D-glyceraldehyde 3-phosphate: step 3/5. Its function is as follows. Catalyzes the interconversion of 2-phosphoglycerate and 3-phosphoglycerate. In Methylobacterium sp. (strain 4-46), this protein is 2,3-bisphosphoglycerate-dependent phosphoglycerate mutase.